We begin with the raw amino-acid sequence, 468 residues long: Heparan-sulfate 6-O-sulfotransferase 2 (468 aa).

The Cytoplasmic segment spans residues 1 to 9 (MDGKSNYSR). Residues 10–30 (LLIALLMILFFGGIVLQYICS) traverse the membrane as a helical; Signal-anchor for type II membrane protein segment. Residues 31 to 468 (TSDWQLLHLA…DYLENVEQWR (438 aa)) are Lumenal-facing. N-linked (GlcNAc...) asparagine glycosylation is present at N79. 103-111 (HIQKTGGTT) contributes to the 3'-phosphoadenylyl sulfate binding site. Substrate-binding positions include 133 to 134 (KK), R150, W155, and H160. H160 (proton acceptor) is an active-site residue. Positions 197 and 205 each coordinate 3'-phosphoadenylyl sulfate. Residues H209 and W216 each coordinate substrate. N276 carries N-linked (GlcNAc...) asparagine glycosylation. A 3'-phosphoadenylyl sulfate-binding site is contributed by 329-331 (TQL). N332 carries an N-linked (GlcNAc...) asparagine glycan. 335-336 (RA) is a binding site for 3'-phosphoadenylyl sulfate. Residues 409 to 447 (FKPTKEPPMTEQSPAFAEEKQADAERTLESETEGQVEEN) form a disordered region. Positions 425–437 (AEEKQADAERTLE) are enriched in basic and acidic residues. Positions 438 to 447 (SETEGQVEEN) are enriched in acidic residues.

Belongs to the sulfotransferase 6 family. In terms of tissue distribution, expressed ubiquitously during gastrulation. During early somitogenesis, strong expression in head and presumptive brain. During mid-somitogenesis, strong expression in eye, hindbrain and somitic boundaries and weak expression in tail bud. During late somitogenesis, strong expression in eye, hindbrain, branchial arch primordia, spinal cord and ventral medial somites. At 24 hours post-fertilization (hpf), strong expression throughout the head, with expression receeding from the trunk spinal cord, ventral medial somites and somitic boundaries; expressed in cells surrounding vascular structures of the dorsal aorta and caudal vein in the tail. At 36 hpf, expressed in lens, optic stalk, hindbrain and pectoral fin. At 48 hpf, expressed in eye, brain, otic vesicle and branchial arches.

Its subcellular location is the membrane. It catalyses the reaction alpha-D-glucosaminyl-[heparan sulfate](n) + 3'-phosphoadenylyl sulfate = 6-sulfo-alpha-D-glucosaminyl-[heparan sulfate](n) + adenosine 3',5'-bisphosphate + H(+). Its function is as follows. 6-O-sulfation enzyme which catalyzes the transfer of sulfate from 3'-phosphoadenosine 5'-phosphosulfate (PAPS) to position 6 of the N-sulfoglucosamine residue (GlcNS) of heparan sulfate. Required for muscle development and angiogenesis. The polypeptide is Heparan-sulfate 6-O-sulfotransferase 2 (hs6st2) (Danio rerio (Zebrafish)).